The sequence spans 188 residues: UPF0314 protein Sala_3154 (188 aa).

Transmembrane regions (helical) follow at residues 8–28, 57–77, and 143–163; these read TGWL…IFMG, WYSF…RWIM, and MRWW…LWTI.

The protein belongs to the UPF0314 family.

It localises to the cell membrane. The protein is UPF0314 protein Sala_3154 of Sphingopyxis alaskensis (strain DSM 13593 / LMG 18877 / RB2256) (Sphingomonas alaskensis).